The following is a 223-amino-acid chain: MSDFIPPAMDQMRKNYSLGGLHENDAKSDPLVQFQSWFEEALEDVPNWFEPNAMTLSTSDVSGDITSRIVLLKGVEEKKFLFYTNYDSTKGSQMRANPRVSLCLFWPHCQRQVRIQGTVDKVSREMSETYFHSRPRDSQLGAHVSQQSSVIDSREAMESSLAQLKARYPEGTQIPLPENWGGYAVTPMSFEFWQGRPSRLHDRLVYKRDDADSNDWVMQRLSP.

Substrate contacts are provided by residues 13–16 and K73; that span reads RKNY. FMN is bound by residues 68-73, 83-84, K90, and Q112; these read RIVLLK and YT. Substrate contacts are provided by Y130, R134, and S138. FMN contacts are provided by residues 147 to 148 and W193; that span reads QS. A substrate-binding site is contributed by 199 to 201; it reads RLH. R203 is an FMN binding site.

The protein belongs to the pyridoxamine 5'-phosphate oxidase family. Homodimer. Requires FMN as cofactor.

The catalysed reaction is pyridoxamine 5'-phosphate + O2 + H2O = pyridoxal 5'-phosphate + H2O2 + NH4(+). It catalyses the reaction pyridoxine 5'-phosphate + O2 = pyridoxal 5'-phosphate + H2O2. The protein operates within cofactor metabolism; pyridoxal 5'-phosphate salvage; pyridoxal 5'-phosphate from pyridoxamine 5'-phosphate: step 1/1. It participates in cofactor metabolism; pyridoxal 5'-phosphate salvage; pyridoxal 5'-phosphate from pyridoxine 5'-phosphate: step 1/1. Functionally, catalyzes the oxidation of either pyridoxine 5'-phosphate (PNP) or pyridoxamine 5'-phosphate (PMP) into pyridoxal 5'-phosphate (PLP). This chain is Pyridoxine/pyridoxamine 5'-phosphate oxidase, found in Rhodopirellula baltica (strain DSM 10527 / NCIMB 13988 / SH1).